The primary structure comprises 832 residues: G-type lectin S-receptor-like serine/threonine-protein kinase RLK1 (832 aa).

The N-terminal stretch at 1-24 (MGSLSCSIIHLVLILQLQTFFVFS) is a signal peptide. At 25–461 (QNIRNGSVPV…VPVTGNRAKK (437 aa)) the chain is on the extracellular side. 6 N-linked (GlcNAc...) asparagine glycosylation sites follow: Asn-29, Asn-92, Asn-100, Asn-178, Asn-240, and Asn-251. In terms of domain architecture, Bulb-type lectin spans 37 to 157 (SLTASESQQI…GSEDSDEVLW (121 aa)). Residues 299–349 (RDNMCSPDDALGNMACGYNNICSLGNNKRPKCECPERFVLKDPSNEYGDCL) form the EGF-like; atypical domain. Disulfide bonds link Cys-303–Cys-320, Cys-314–Cys-330, and Cys-332–Cys-348. Positions 357–446 (CRPENQTANS…DSDTFIKVRN (90 aa)) constitute a PAN domain. A glycan (N-linked (GlcNAc...) asparagine) is linked at Asn-361. Cystine bridges form between Cys-397-Cys-420 and Cys-401-Cys-407. N-linked (GlcNAc...) asparagine glycosylation occurs at Asn-446. The chain crosses the membrane as a helical span at residues 462 to 482 (LDWLIIACSVLLGTSAFVIFD). The Cytoplasmic portion of the chain corresponds to 483–832 (TSCSYRKTKK…SLSSDPVSLV (350 aa)). Residues 531 to 803 (RDFTEELGRG…NVTQMLEGVI (273 aa)) form the Protein kinase domain. ATP contacts are provided by residues 537–545 (LGRGAFGIV) and Lys-563. Positions 622-638 (RRPRPSWEDRKNIAVAI) are caM-binding. Asp-657 (proton acceptor) is an active-site residue.

Belongs to the protein kinase superfamily. Ser/Thr protein kinase family.

Its subcellular location is the cell membrane. The catalysed reaction is L-seryl-[protein] + ATP = O-phospho-L-seryl-[protein] + ADP + H(+). It carries out the reaction L-threonyl-[protein] + ATP = O-phospho-L-threonyl-[protein] + ADP + H(+). The sequence is that of G-type lectin S-receptor-like serine/threonine-protein kinase RLK1 (RLK1) from Arabidopsis thaliana (Mouse-ear cress).